Reading from the N-terminus, the 292-residue chain is 33 kDa chaperonin (292 aa).

Cystine bridges form between Cys230-Cys232 and Cys263-Cys266.

It belongs to the HSP33 family. Under oxidizing conditions two disulfide bonds are formed involving the reactive cysteines. Under reducing conditions zinc is bound to the reactive cysteines and the protein is inactive.

Its subcellular location is the cytoplasm. Redox regulated molecular chaperone. Protects both thermally unfolding and oxidatively damaged proteins from irreversible aggregation. Plays an important role in the bacterial defense system toward oxidative stress. The polypeptide is 33 kDa chaperonin (Serratia proteamaculans (strain 568)).